Reading from the N-terminus, the 74-residue chain is Translation initiation factor IF-1, chloroplastic (74 aa).

The 72-residue stretch at 1-72 (MEKQNIIEME…TKGRITYRLR (72 aa)) folds into the S1-like domain.

Belongs to the IF-1 family. Component of the 30S ribosomal translation pre-initiation complex which assembles on the 30S ribosome in the order IF-2 and IF-3, IF-1 and N-formylmethionyl-tRNA(fMet); mRNA recruitment can occur at any time during PIC assembly.

The protein resides in the plastid. The protein localises to the chloroplast. One of the essential components for the initiation of protein synthesis. Stabilizes the binding of IF-2 and IF-3 on the 30S subunit to which N-formylmethionyl-tRNA(fMet) subsequently binds. Helps modulate mRNA selection, yielding the 30S pre-initiation complex (PIC). Upon addition of the 50S ribosomal subunit IF-1, IF-2 and IF-3 are released leaving the mature 70S translation initiation complex. The polypeptide is Translation initiation factor IF-1, chloroplastic (Chlorokybus atmophyticus (Soil alga)).